The chain runs to 141 residues: Nucleoside diphosphate kinase (141 aa).

Residues Lys11, Phe59, Arg87, Thr93, Arg104, and Asn114 each coordinate ATP. Catalysis depends on His117, which acts as the Pros-phosphohistidine intermediate.

The protein belongs to the NDK family. In terms of assembly, homotetramer. Requires Mg(2+) as cofactor.

The protein resides in the cytoplasm. It carries out the reaction a 2'-deoxyribonucleoside 5'-diphosphate + ATP = a 2'-deoxyribonucleoside 5'-triphosphate + ADP. It catalyses the reaction a ribonucleoside 5'-diphosphate + ATP = a ribonucleoside 5'-triphosphate + ADP. In terms of biological role, major role in the synthesis of nucleoside triphosphates other than ATP. The ATP gamma phosphate is transferred to the NDP beta phosphate via a ping-pong mechanism, using a phosphorylated active-site intermediate. The sequence is that of Nucleoside diphosphate kinase from Mannheimia succiniciproducens (strain KCTC 0769BP / MBEL55E).